Here is a 338-residue protein sequence, read N- to C-terminus: Tryptophan--tRNA ligase (338 aa).

Residues 11 to 13 (QPS) and 19 to 20 (GN) contribute to the ATP site. Residues 12 to 20 (PSGELSIGN) carry the 'HIGH' region motif. Asp-135 lines the L-tryptophan pocket. ATP is bound by residues 147–149 (GSD), Val-189, and 198–202 (KMSKS). The short motif at 198-202 (KMSKS) is the 'KMSKS' region element.

It belongs to the class-I aminoacyl-tRNA synthetase family. Homodimer.

It is found in the cytoplasm. It catalyses the reaction tRNA(Trp) + L-tryptophan + ATP = L-tryptophyl-tRNA(Trp) + AMP + diphosphate + H(+). Its function is as follows. Catalyzes the attachment of tryptophan to tRNA(Trp). The sequence is that of Tryptophan--tRNA ligase from Vibrio cholerae serotype O1 (strain ATCC 39315 / El Tor Inaba N16961).